A 248-amino-acid chain; its full sequence is Mannose-binding protein C (248 aa).

A signal peptide spans 1-20 (MSLFPSLTLLLLSVVATSYS). A Collagen-like domain is found at 42-99 (GINGFPGKDGRDGTKGEKGEPGQGLRGLQGPPGKLGPPGNPGSSGSPGPKGQKGDPGE). The disordered stretch occupies residues 43 to 111 (INGFPGKDGR…DCESSLAASE (69 aa)). Pro47 carries the post-translational modification 4-hydroxyproline. Residues 49–61 (KDGRDGTKGEKGE) are compositionally biased toward basic and acidic residues. Pro73, Pro79, Pro82, and Pro88 each carry 4-hydroxyproline. The segment covering 82-91 (PGSSGSPGPK) has biased composition (low complexity). Residues 112–130 (RKALQTEMARIKKWLTFSL) are a coiled coil. The 112-residue stretch at 134 to 245 (VGNKFFLTNG…CSSSHLALCE (112 aa)) folds into the C-type lectin domain. 2 cysteine pairs are disulfide-bonded: Cys155/Cys244 and Cys222/Cys236.

In terms of assembly, oligomeric complex of 3 or more homotrimers. Interacts with MASP1 and MASP2. Interacts with MEP1A and MEP1B and may inhibit their catalytic activity. Post-translationally, hydroxylation on proline residues within the sequence motif, GXPG, is most likely to be 4-hydroxy as this fits the requirement for 4-hydroxylation in vertebrates.

It localises to the secreted. Calcium-dependent lectin involved in innate immune defense. Binds mannose, fucose and N-acetylglucosamine on different microorganisms and activates the lectin complement pathway. Binds to late apoptotic cells, as well as to apoptotic blebs and to necrotic cells, but not to early apoptotic cells, facilitating their uptake by macrophages. The sequence is that of Mannose-binding protein C (MBL2) from Macaca fascicularis (Crab-eating macaque).